A 2252-amino-acid polypeptide reads, in one-letter code: RNA1 polyprotein (2252 aa).

Residues 565 to 1140 (MITTLAQSIF…QGREFIVSNG (576 aa)) are Cytoplasmic-facing. The 167-residue stretch at 733–899 (MKDLLELQKR…PGVIFDPDNA (167 aa)) folds into the SF3 helicase domain. 763–770 (GPSHCGKS) lines the ATP pocket. Residues 1141–1161 (GGILMIAAAIILVLVCGWGFW) traverse the membrane as a helical segment. Over 1162–1187 (KAFVGLFTGSMSLGAALAGCQEAEVK) the chain is Lumenal. One can recognise a Peptidase C3 domain in the interval 1213–1422 (SYARSQAGNG…WACILPNPHL (210 aa)). Catalysis depends on for picornain 3C-like protease activity residues His-1256, Glu-1294, and Cys-1386. The 129-residue stretch at 1697 to 1825 (NEAINCDYSG…SVSPAVASWF (129 aa)) folds into the RdRp catalytic domain.

Belongs to the nepoviruses RNA1 polyprotein family. Post-translationally, specific enzymatic cleavages by picornain 3C-like protease in vivo yield mature proteins. Picornain 3C-like protease is autocatalytically processed. In terms of processing, VPg is uridylylated by the polymerase and is covalently linked to the 5'-end of genomic RNA. This uridylylated form acts as a nucleotide-peptide primer for the polymerase.

The protein localises to the host endoplasmic reticulum lumen. It localises to the host endoplasmic reticulum membrane. It carries out the reaction RNA(n) + a ribonucleoside 5'-triphosphate = RNA(n+1) + diphosphate. Functionally, picornain 3C-like protease is a thiol protease that cleaves the P1 and P2 polyproteins. In Apium graveolens (Celery), this protein is RNA1 polyprotein.